The primary structure comprises 300 residues: Porphobilinogen deaminase (300 aa).

Cys239 carries the post-translational modification S-(dipyrrolylmethanemethyl)cysteine.

The protein belongs to the HMBS family. In terms of assembly, monomer. It depends on dipyrromethane as a cofactor.

The enzyme catalyses 4 porphobilinogen + H2O = hydroxymethylbilane + 4 NH4(+). Its pathway is porphyrin-containing compound metabolism; protoporphyrin-IX biosynthesis; coproporphyrinogen-III from 5-aminolevulinate: step 2/4. In terms of biological role, tetrapolymerization of the monopyrrole PBG into the hydroxymethylbilane pre-uroporphyrinogen in several discrete steps. The polypeptide is Porphobilinogen deaminase (Francisella tularensis subsp. holarctica (strain OSU18)).